A 159-amino-acid chain; its full sequence is Biogenesis of lysosome-related organelles complex 1 subunit 2 (159 aa).

Residues Met-1–Ala-37 are disordered. Polar residues predominate over residues Gln-14 to Glu-36. Residues Glu-69–Asp-134 are a coiled coil.

Belongs to the BLOC1S2 family. Homodimer. Component of the biogenesis of lysosome-related organelles complex-1 (BLOC-1) composed of Blos1, Blos2, Blos3, Blos4, Dysb, Muted, Pldn and Snapin. Interacts with Snapin.

Functionally, component of the biogenesis of lysosome-related organelles complex-1 (BLOC-1) involved in pigment granule biogenesis. This chain is Biogenesis of lysosome-related organelles complex 1 subunit 2, found in Drosophila melanogaster (Fruit fly).